A 315-amino-acid chain; its full sequence is Ribosomal RNA small subunit methyltransferase H (315 aa).

Residues glycine 36–histidine 38, aspartate 56, phenylalanine 81, aspartate 103, and glutamine 110 each bind S-adenosyl-L-methionine.

It belongs to the methyltransferase superfamily. RsmH family.

It localises to the cytoplasm. It catalyses the reaction cytidine(1402) in 16S rRNA + S-adenosyl-L-methionine = N(4)-methylcytidine(1402) in 16S rRNA + S-adenosyl-L-homocysteine + H(+). Functionally, specifically methylates the N4 position of cytidine in position 1402 (C1402) of 16S rRNA. The sequence is that of Ribosomal RNA small subunit methyltransferase H from Idiomarina loihiensis (strain ATCC BAA-735 / DSM 15497 / L2-TR).